The primary structure comprises 781 residues: Cytosolic phospholipase A2 beta (781 aa).

The region spanning 1 to 112 (MAVAEVSRTC…RAGEFRRESF (112 aa)) is the C2 domain. Ca(2+) contacts are provided by Asp26, Asp32, Asp82, Asp84, and Asp90. The PLA2c domain occupies 246–781 (EAGLRELAVR…VQRRRQRRPH (536 aa)). The Nucleophile role is filled by Ser335. Asp615 functions as the Proton acceptor in the catalytic mechanism.

It depends on Ca(2+) as a cofactor. Widely expressed. Expressed at higher level in brain, heart, liver, cerebellum and pancreas.

The protein resides in the cytoplasm. Its subcellular location is the cytosol. It is found in the mitochondrion membrane. The protein localises to the early endosome membrane. The enzyme catalyses a 1,2-diacyl-sn-glycero-3-phosphocholine + H2O = a 1-acyl-sn-glycero-3-phosphocholine + a fatty acid + H(+). It carries out the reaction a 1-acyl-sn-glycero-3-phosphocholine + H2O = sn-glycerol 3-phosphocholine + a fatty acid + H(+). The catalysed reaction is 1-hexadecanoyl-2-(9Z,12Z-octadecadienoyl)-sn-glycero-3-phosphoethanolamine + H2O = 1-hexadecanoyl-sn-glycero-3-phosphoethanolamine + (9Z,12Z)-octadecadienoate + H(+). It catalyses the reaction 1-hexadecanoyl-2-(5Z,8Z,11Z,14Z-eicosatetraenoyl)-sn-glycero-3-phosphoethanolamine + H2O = 1-hexadecanoyl-sn-glycero-3-phosphoethanolamine + (5Z,8Z,11Z,14Z)-eicosatetraenoate + H(+). The enzyme catalyses 1-hexadecanoyl-sn-glycero-3-phosphocholine + H2O = sn-glycerol 3-phosphocholine + hexadecanoate + H(+). It carries out the reaction 1-hexadecanoyl-2-(5Z,8Z,11Z,14Z-eicosatetraenoyl)-sn-glycero-3-phosphocholine + H2O = 1-hexadecanoyl-sn-glycero-3-phosphocholine + (5Z,8Z,11Z,14Z)-eicosatetraenoate + H(+). The catalysed reaction is 1-hexadecanoyl-2-(5Z,8Z,11Z,14Z-eicosatetraenoyl)-sn-glycero-3-phosphocholine + H2O = 2-(5Z,8Z,11Z,14Z)-eicosatetraenoyl-sn-glycero-3-phosphocholine + hexadecanoate + H(+). Its activity is regulated as follows. Stimulated by cytosolic Ca(2+). Calcium-dependent phospholipase A1 and A2 and lysophospholipase that may play a role in membrane phospholipid remodeling. Functionally, calcium-dependent phospholipase A2 and lysophospholipase. Cleaves the ester bond of the fatty acyl group attached to the sn-2 position of phosphatidylethanolamines, producing lysophospholipids that may be used in deacylation-reacylation cycles. Hydrolyzes lysophosphatidylcholines with low efficiency but is inefficient toward phosphatidylcholines. In terms of biological role, calcium-dependent phospholipase A1 and A2 and lysophospholipase. Cleaves the ester bond of the fatty acyl group attached to the sn-1 or sn-2 position of diacyl phospholipids (phospholipase A1 and A2 activity, respectively), producing lysophospholipids that may be used in deacylation-reacylation cycles. Can further hydrolyze lysophospholipids enabling complete deacylation. Has no activity toward alkylacyl phospholipids. This is Cytosolic phospholipase A2 beta (PLA2G4B) from Homo sapiens (Human).